We begin with the raw amino-acid sequence, 573 residues long: NEDD4-binding protein 3-B (573 aa).

Disordered regions lie at residues 119–138, 173–220, and 384–405; these read EFSKSSLPERGHSDKSRFGP, CVGS…NSYS, and GENEELRQKQSQSDNSGPNLED. A compositionally biased stretch (basic and acidic residues) spans 125 to 135; that stretch reads LPERGHSDKSR. The segment covering 186 to 196 has biased composition (low complexity); that stretch reads SNSHSNNPSES. Composition is skewed to polar residues over residues 207-220 and 392-401; these read DSKQNSINSLNSYS and KQSQSDNSGP. Residues 287–474 adopt a coiled-coil conformation; it reads ESVEDVARQL…CLQALEDVKS (188 aa).

Belongs to the N4BP3 family.

The protein localises to the cytoplasmic vesicle. The protein resides in the cell projection. It localises to the axon. It is found in the dendrite. Its function is as follows. Plays a role in axon and dendrite arborization during cranial nerve development. Also important for neural crest migration and early development of other anterior structures including eye, brain and cranial cartilage. This is NEDD4-binding protein 3-B from Xenopus laevis (African clawed frog).